Here is a 295-residue protein sequence, read N- to C-terminus: MMRILLFLATNLAVVLIASITLSLFGFNGFMAANGVDLNLNQLLVFCAVFGFAGSLFSLFISKWMAKMSTGTQIISQPRTRHEQWLLQTVEQLSRDAGIKMPEVGIFPAYEANAFATGWNKNDALVAVSHGLLERFSPDEVKAVLAHEIGHVANGDMVTLALVQGVVNTFVMFFARIIGNFVDKVIFKSENGQGIAYYITTIFAELVLGFLASAIVMWFSRKREFRADDAGARLAGTDAMIGALQRLRSEQGVPVNMPDSLTAFGINAGLKKGLAGLFMSHPPLEQRIEALRRRG.

2 consecutive transmembrane segments (helical) span residues 4–24 (ILLFLATNLAVVLIASITLSL) and 42–62 (QLLVFCAVFGFAGSLFSLFIS). His-147 is a binding site for Zn(2+). Glu-148 is an active-site residue. His-151 is a binding site for Zn(2+). Transmembrane regions (helical) follow at residues 158–178 (VTLALVQGVVNTFVMFFARII) and 199–219 (ITTIFAELVLGFLASAIVMWF). Glu-224 contributes to the Zn(2+) binding site.

It belongs to the peptidase M48B family. Requires Zn(2+) as cofactor.

Its subcellular location is the cell inner membrane. This Pseudomonas savastanoi pv. phaseolicola (strain 1448A / Race 6) (Pseudomonas syringae pv. phaseolicola (strain 1448A / Race 6)) protein is Protease HtpX.